A 493-amino-acid chain; its full sequence is Glutamyl-tRNA(Gln) amidotransferase subunit A (493 aa).

Catalysis depends on charge relay system residues Lys79 and Ser159. Ser183 (acyl-ester intermediate) is an active-site residue.

Belongs to the amidase family. GatA subfamily. As to quaternary structure, heterotrimer of A, B and C subunits.

The catalysed reaction is L-glutamyl-tRNA(Gln) + L-glutamine + ATP + H2O = L-glutaminyl-tRNA(Gln) + L-glutamate + ADP + phosphate + H(+). Functionally, allows the formation of correctly charged Gln-tRNA(Gln) through the transamidation of misacylated Glu-tRNA(Gln) in organisms which lack glutaminyl-tRNA synthetase. The reaction takes place in the presence of glutamine and ATP through an activated gamma-phospho-Glu-tRNA(Gln). This Brucella melitensis biotype 2 (strain ATCC 23457) protein is Glutamyl-tRNA(Gln) amidotransferase subunit A.